A 207-amino-acid polypeptide reads, in one-letter code: Ribosome maturation factor RimM (207 aa).

The 94-residue stretch at 114-207 folds into the PRC barrel domain; sequence DDEYYWVDLI…RIDSDWPLDY (94 aa).

This sequence belongs to the RimM family. As to quaternary structure, binds ribosomal protein uS19.

It is found in the cytoplasm. In terms of biological role, an accessory protein needed during the final step in the assembly of 30S ribosomal subunit, possibly for assembly of the head region. Essential for efficient processing of 16S rRNA. May be needed both before and after RbfA during the maturation of 16S rRNA. It has affinity for free ribosomal 30S subunits but not for 70S ribosomes. In Bordetella bronchiseptica (strain ATCC BAA-588 / NCTC 13252 / RB50) (Alcaligenes bronchisepticus), this protein is Ribosome maturation factor RimM.